The following is a 439-amino-acid chain: uncharacterized protein (439 aa).

The span at 268–284 (QQQQQQQPQHNNNNTQV) shows a compositional bias: low complexity. The segment at 268-439 (QQQQQQQPQH…RTRFTTTNLH (172 aa)) is disordered. Pro residues predominate over residues 285-328 (QPPPPSQQLPPPPKPQPQLPKPQPQKPQPQLPKPPQQPKPPQEP). Over residues 350-439 (QEQQQQPPQE…RTRFTTTNLH (90 aa)) the composition is skewed to low complexity.

This is an uncharacterized protein from Dictyostelium discoideum (Social amoeba).